The chain runs to 309 residues: MEEILKTLPQHTCSWLKHKIIMYKYQDFWTSKQLLEGTLMAQQSFKAEPSDVFLCSAPKTGTTWLKALAFAIVTRENFDESTSPLLKKLVHECVPFLERQVEEIEHNRESSSLPLVATHLPYASLPESVIASNCRMVYIYRNIKDVIVSNYHFLREAFKLSMEDAPFEETFEDFYNGNSSYGPYWDHILGYRKASLDMPDKILFLKYEDLKSEPISNVKRLAEFIGYPFSNDEEKAGVIENIINMCSFENLSSLEVNKTRKPKGGMLENRLYYRKGQDGDWKNYFTNEMKEKIDKIMDEKLSGTGLILK.

Residue 59 to 64 (KTGTTW) participates in 3'-phosphoadenylyl sulfate binding. The active-site Proton acceptor is the His119. 3'-phosphoadenylyl sulfate-binding positions include Arg141, Ser149, Tyr207, and 274–276 (RKG).

The protein belongs to the sulfotransferase 1 family.

It is found in the cytoplasm. The polypeptide is Flavonol sulfotransferase-like (Flaveria bidentis (Coastal plain yellowtops)).